The sequence spans 385 residues: Aspartate carbamoyltransferase 2, chloroplastic (385 aa).

The transit peptide at Met1–Ser30 directs the protein to the chloroplast. Positions 131 and 132 each coordinate carbamoyl phosphate. UMP contacts are provided by Arg131 and Thr132. Lys161 contributes to the L-aspartate binding site. Carbamoyl phosphate-binding residues include Arg182, His210, and Gln213. UMP-binding residues include Arg182 and His210. Arg243 and Arg305 together coordinate UMP. 2 residues coordinate L-aspartate: Arg243 and Arg305. Residues Leu345 and Pro346 each contribute to the carbamoyl phosphate site.

It belongs to the aspartate/ornithine carbamoyltransferase superfamily. ATCase family. As to quaternary structure, homotrimer.

It localises to the plastid. The protein resides in the chloroplast. It catalyses the reaction carbamoyl phosphate + L-aspartate = N-carbamoyl-L-aspartate + phosphate + H(+). It participates in pyrimidine metabolism; UMP biosynthesis via de novo pathway; (S)-dihydroorotate from bicarbonate: step 2/3. With respect to regulation, feedback inhibited by UMP. Catalyzes the condensation of carbamoyl phosphate and aspartate to form carbamoyl aspartate and inorganic phosphate, the committed step in the de novo pyrimidine nucleotide biosynthesis pathway. The polypeptide is Aspartate carbamoyltransferase 2, chloroplastic (PYRB2) (Pisum sativum (Garden pea)).